A 510-amino-acid polypeptide reads, in one-letter code: NAD(P)H-quinone oxidoreductase subunit 2 B, chloroplastic (510 aa).

Helical transmembrane passes span 24 to 44 (LLLF…GLIL), 57 to 77 (IPWL…ALLF), 99 to 119 (IFQF…VEYI), 124 to 144 (MAIT…MFLC), 183 to 203 (YLLM…WLYG), 227 to 247 (PGIS…LSPA), 295 to 315 (WHLL…LIAI), 323 to 343 (MLAY…IVGD), 347 to 367 (GYAS…GTFA), 395 to 415 (ALSS…AGFF), 418 to 438 (LHLF…IGLL), and 484 to 504 (MIVC…IIAI).

Belongs to the complex I subunit 2 family. NDH is composed of at least 16 different subunits, 5 of which are encoded in the nucleus.

The protein resides in the plastid. It is found in the chloroplast thylakoid membrane. The enzyme catalyses a plastoquinone + NADH + (n+1) H(+)(in) = a plastoquinol + NAD(+) + n H(+)(out). It carries out the reaction a plastoquinone + NADPH + (n+1) H(+)(in) = a plastoquinol + NADP(+) + n H(+)(out). NDH shuttles electrons from NAD(P)H:plastoquinone, via FMN and iron-sulfur (Fe-S) centers, to quinones in the photosynthetic chain and possibly in a chloroplast respiratory chain. The immediate electron acceptor for the enzyme in this species is believed to be plastoquinone. Couples the redox reaction to proton translocation, and thus conserves the redox energy in a proton gradient. This chain is NAD(P)H-quinone oxidoreductase subunit 2 B, chloroplastic, found in Calycanthus floridus var. glaucus (Eastern sweetshrub).